A 93-amino-acid polypeptide reads, in one-letter code: Small ribosomal subunit protein uS19 (93 aa).

This sequence belongs to the universal ribosomal protein uS19 family.

Protein S19 forms a complex with S13 that binds strongly to the 16S ribosomal RNA. This Clostridium perfringens (strain ATCC 13124 / DSM 756 / JCM 1290 / NCIMB 6125 / NCTC 8237 / Type A) protein is Small ribosomal subunit protein uS19.